The chain runs to 172 residues: 3-hydroxydecanoyl-[acyl-carrier-protein] dehydratase (172 aa).

The active site involves His71.

Belongs to the thioester dehydratase family. FabA subfamily. Homodimer.

The protein localises to the cytoplasm. It carries out the reaction a (3R)-hydroxyacyl-[ACP] = a (2E)-enoyl-[ACP] + H2O. The catalysed reaction is (3R)-hydroxydecanoyl-[ACP] = (2E)-decenoyl-[ACP] + H2O. It catalyses the reaction (2E)-decenoyl-[ACP] = (3Z)-decenoyl-[ACP]. It functions in the pathway lipid metabolism; fatty acid biosynthesis. Its function is as follows. Necessary for the introduction of cis unsaturation into fatty acids. Catalyzes the dehydration of (3R)-3-hydroxydecanoyl-ACP to E-(2)-decenoyl-ACP and then its isomerization to Z-(3)-decenoyl-ACP. Can catalyze the dehydratase reaction for beta-hydroxyacyl-ACPs with saturated chain lengths up to 16:0, being most active on intermediate chain length. The sequence is that of 3-hydroxydecanoyl-[acyl-carrier-protein] dehydratase from Pectobacterium atrosepticum (strain SCRI 1043 / ATCC BAA-672) (Erwinia carotovora subsp. atroseptica).